The following is a 669-amino-acid chain: Cysteine-rich receptor-like protein kinase 10 (669 aa).

Positions 1–34 (MRRNTDQESPIMSYYSSFFFLFLFSFLTSFRVSA) are cleaved as a signal peptide. Topologically, residues 35–285 (QDPTYVYHTC…PRSGKDGNSK (251 aa)) are extracellular. 2 Gnk2-homologous domains span residues 38–142 (TYVY…NQNI) and 148–252 (TTGG…IYAF). N-linked (GlcNAc...) asparagine glycosylation is found at N49, N53, N71, and N80. Cystine bridges form between C96-C105 and C108-C133. Residues N114, N159, N185, and N196 are each glycosylated (N-linked (GlcNAc...) asparagine). 2 cysteine pairs are disulfide-bonded: C209/C218 and C221/C243. Residues 260–274 (PPPPPPSISTPPVSA) are compositionally biased toward pro residues. Residues 260–280 (PPPPPPSISTPPVSAPPRSGK) are disordered. A helical membrane pass occupies residues 286–306 (VLVIAIVVPIIVAVLLFIAGY). Residues 307–669 (CFLTRRARKS…DASITDIHPR (363 aa)) lie on the Cytoplasmic side of the membrane. Residues 348-634 (FVESNKIGQG…TLPVPRQPGL (287 aa)) form the Protein kinase domain. ATP contacts are provided by residues 354-362 (IGQGGFGEV) and K376. The residue at position 421 (Y421) is a Phosphotyrosine. D473 acts as the Proton acceptor in catalysis. At S477 the chain carries Phosphoserine. The residue at position 513 (T513) is a Phosphothreonine. Position 521 is a phosphotyrosine (Y521).

This sequence belongs to the protein kinase superfamily. Ser/Thr protein kinase family. CRK subfamily. As to quaternary structure, interacts with CRKIP1 (KAPP), CRKIP2 and CRKIP3, three kinase-associated type 2C proteins.

Its subcellular location is the membrane. It catalyses the reaction L-seryl-[protein] + ATP = O-phospho-L-seryl-[protein] + ADP + H(+). It carries out the reaction L-threonyl-[protein] + ATP = O-phospho-L-threonyl-[protein] + ADP + H(+). This chain is Cysteine-rich receptor-like protein kinase 10 (CRK10), found in Arabidopsis thaliana (Mouse-ear cress).